The following is a 281-amino-acid chain: Cytochrome bc1 complex cytochrome c subunit (281 aa).

Residues 17-37 (AAGAMALAVGLTGAGILVNAV) form a helical membrane-spanning segment. 2 consecutive Cytochrome c domains span residues 52–132 (ALIQ…EANG) and 162–240 (ADVA…KSAK). Heme c contacts are provided by C65, C68, H69, C175, C178, and H179. A helical membrane pass occupies residues 259–279 (GMMMWLVGIVVLVAAAMWIGS).

As to quaternary structure, the cytochrome bc1 complex is composed of a cytochrome b (QcrB), the Rieske iron-sulfur protein (QcrA) and a diheme cytochrome c (QcrC) subunit. The bc1 complex forms a supercomplex with cytochrome c oxidase (cytochrome aa3). In terms of processing, binds 2 heme c groups covalently per subunit.

Its subcellular location is the cell membrane. It carries out the reaction a quinol + 2 Fe(III)-[cytochrome c](out) = a quinone + 2 Fe(II)-[cytochrome c](out) + 2 H(+)(out). In terms of biological role, cytochrome c1 subunit of the cytochrome bc1 complex, an essential component of the respiratory electron transport chain required for ATP synthesis. The bc1 complex catalyzes the oxidation of menaquinol and the reduction of cytochrome c in the respiratory chain. The bc1 complex operates through a Q-cycle mechanism that couples electron transfer to generation of the proton gradient that drives ATP synthesis. In Corynebacterium diphtheriae (strain ATCC 700971 / NCTC 13129 / Biotype gravis), this protein is Cytochrome bc1 complex cytochrome c subunit (qcrC).